A 90-amino-acid chain; its full sequence is Mitochondrial import inner membrane translocase subunit Tim10 (90 aa).

The short motif at Cys37–Cys62 is the Twin CX3C motif element. Cystine bridges form between Cys37–Cys62 and Cys41–Cys58.

Belongs to the small Tim family. Heterohexamer; composed of 3 copies of TIM9 and 3 copies of TIM10, named soluble 70 kDa complex. Associates directly with the TIM22 complex, whose core is composed of TIM22 and TIM54. Interacts with the transmembrane regions of multi-pass transmembrane proteins in transit.

It localises to the mitochondrion inner membrane. Mitochondrial intermembrane chaperone that participates in the import and insertion of multi-pass transmembrane proteins into the mitochondrial inner membrane. Also required for the transfer of beta-barrel precursors from the TOM complex to the sorting and assembly machinery (SAM complex) of the outer membrane. Acts as a chaperone-like protein that protects the hydrophobic precursors from aggregation and guide them through the mitochondrial intermembrane space. This is Mitochondrial import inner membrane translocase subunit Tim10 (TIM10) from Pichia sorbitophila (strain ATCC MYA-4447 / BCRC 22081 / CBS 7064 / NBRC 10061 / NRRL Y-12695) (Hybrid yeast).